Reading from the N-terminus, the 172-residue chain is WW domain binding protein VOPP1 (172 aa).

An N-terminal signal peptide occupies residues 1–22 (MRRQPAKVAALLLGLLLECTEA). Topologically, residues 23–60 (KKHCWYFEGLYPTYYICRSYEDCCGSRCCVRALSIQRL) are extracellular. The helical transmembrane segment at 61 to 81 (WYFWFLLMMGVLFCCGAGFFI) threads the bilayer. The Cytoplasmic segment spans residues 82–172 (RRRMYPPPLI…PPYEQVVKAK (91 aa)). The interval 102–153 (RQPPNPGPGAQQPGPPYYTDPGGPGMNPVGNSMAMAFQVPPNSPQGSVACPP) is disordered. Pro residues predominate over residues 104 to 119 (PPNPGPGAQQPGPPYY).

Belongs to the VOPP1/ECOP family. As to quaternary structure, interacts with WWOX (via WW domain). Widely expressed with highest levels in thymus and ovary.

It is found in the cytoplasmic vesicle membrane. It localises to the late endosome membrane. The protein localises to the lysosome membrane. Functionally, increases the transcriptional activity of NFKB1 by facilitating its nuclear translocation, DNA-binding and associated apoptotic response, when overexpressed. May sequester WWOX in lysosomal vesicles and thereby regulate WWOX role as tumor suppressor. This chain is WW domain binding protein VOPP1, found in Homo sapiens (Human).